Here is a 273-residue protein sequence, read N- to C-terminus: WIMGHMVNSIAQIDEFVNLGANSIETDVSFDKQANPEYMYHGTPCDCGRDCLHWENFNDFLKGLRKATTPGDSKYHEKLILVVFDLKTGSLYDNQAYDAGTKLAKNLLEHYWNNGNNGGRAYIVLSIPNLNHYKLIAGFKDTLKNEGHEDLLEKVGHDFSGNDDIPDVEKAYKNAGVTGHVWQSDGITNCLPRGLSRVKLAIANRDSGSGIINKVYYWTVDKRSTTRNSLDAGVDGIMTNYPGVIADVLSESAYKNKYKIATYEDNPWETFKP.

H5 is a catalytic residue. Mg(2+) contacts are provided by E25 and D27. H41 acts as the Nucleophile in catalysis. 2 cysteine pairs are disulfide-bonded: C45–C51 and C47–C190. A Mg(2+)-binding site is contributed by D85.

It belongs to the arthropod phospholipase D family. Class II subfamily. It depends on Mg(2+) as a cofactor. In terms of tissue distribution, expressed by the venom gland.

The protein localises to the secreted. The catalysed reaction is an N-(acyl)-sphingosylphosphocholine = an N-(acyl)-sphingosyl-1,3-cyclic phosphate + choline. It carries out the reaction an N-(acyl)-sphingosylphosphoethanolamine = an N-(acyl)-sphingosyl-1,3-cyclic phosphate + ethanolamine. The enzyme catalyses a 1-acyl-sn-glycero-3-phosphocholine = a 1-acyl-sn-glycero-2,3-cyclic phosphate + choline. It catalyses the reaction a 1-acyl-sn-glycero-3-phosphoethanolamine = a 1-acyl-sn-glycero-2,3-cyclic phosphate + ethanolamine. Its function is as follows. Dermonecrotic toxins cleave the phosphodiester linkage between the phosphate and headgroup of certain phospholipids (sphingolipid and lysolipid substrates), forming an alcohol (often choline) and a cyclic phosphate. This toxin acts on sphingomyelin (SM). It may also act on ceramide phosphoethanolamine (CPE), lysophosphatidylcholine (LPC) and lysophosphatidylethanolamine (LPE), but not on lysophosphatidylserine (LPS), and lysophosphatidylglycerol (LPG). It acts by transphosphatidylation, releasing exclusively cyclic phosphate products as second products. Induces dermonecrosis, hemolysis, increased vascular permeability, edema, inflammatory response, and platelet aggregation. This is Dermonecrotic toxin LruSicTox-alphaIC1b from Loxosceles rufescens (Mediterranean recluse spider).